A 552-amino-acid chain; its full sequence is ATP synthase subunit alpha (552 aa).

173–180 provides a ligand contact to ATP; the sequence is GDRQTGKT. Residues 526–552 are disordered; the sequence is ASPLDPSAVRKESIPVHRAPARTDDEG. The span at 533 to 552 shows a compositional bias: basic and acidic residues; that stretch reads AVRKESIPVHRAPARTDDEG.

This sequence belongs to the ATPase alpha/beta chains family. As to quaternary structure, F-type ATPases have 2 components, CF(1) - the catalytic core - and CF(0) - the membrane proton channel. CF(1) has five subunits: alpha(3), beta(3), gamma(1), delta(1), epsilon(1). CF(0) has three main subunits: a(1), b(2) and c(9-12). The alpha and beta chains form an alternating ring which encloses part of the gamma chain. CF(1) is attached to CF(0) by a central stalk formed by the gamma and epsilon chains, while a peripheral stalk is formed by the delta and b chains.

It localises to the cell membrane. The catalysed reaction is ATP + H2O + 4 H(+)(in) = ADP + phosphate + 5 H(+)(out). Produces ATP from ADP in the presence of a proton gradient across the membrane. The alpha chain is a regulatory subunit. The protein is ATP synthase subunit alpha of Frankia alni (strain DSM 45986 / CECT 9034 / ACN14a).